We begin with the raw amino-acid sequence, 466 residues long: Glutamate--tRNA ligase (466 aa).

Residues 11 to 21 (PSPTGFIHLGN) carry the 'HIGH' region motif. Residues 243 to 247 (KMSKR) carry the 'KMSKS' region motif. Lys-246 lines the ATP pocket.

The protein belongs to the class-I aminoacyl-tRNA synthetase family. Glutamate--tRNA ligase type 1 subfamily. Monomer.

It is found in the cytoplasm. The enzyme catalyses tRNA(Glu) + L-glutamate + ATP = L-glutamyl-tRNA(Glu) + AMP + diphosphate. Functionally, catalyzes the attachment of glutamate to tRNA(Glu) in a two-step reaction: glutamate is first activated by ATP to form Glu-AMP and then transferred to the acceptor end of tRNA(Glu). This chain is Glutamate--tRNA ligase, found in Cupriavidus taiwanensis (strain DSM 17343 / BCRC 17206 / CCUG 44338 / CIP 107171 / LMG 19424 / R1) (Ralstonia taiwanensis (strain LMG 19424)).